Reading from the N-terminus, the 185-residue chain is Elongation factor P (185 aa).

This sequence belongs to the elongation factor P family.

Its subcellular location is the cytoplasm. It functions in the pathway protein biosynthesis; polypeptide chain elongation. Involved in peptide bond synthesis. Stimulates efficient translation and peptide-bond synthesis on native or reconstituted 70S ribosomes in vitro. Probably functions indirectly by altering the affinity of the ribosome for aminoacyl-tRNA, thus increasing their reactivity as acceptors for peptidyl transferase. The chain is Elongation factor P from Listeria innocua serovar 6a (strain ATCC BAA-680 / CLIP 11262).